Here is a 343-residue protein sequence, read N- to C-terminus: Beta-ketoacyl-[acyl-carrier-protein] synthase III 1 (343 aa).

Residues Cys122 and His268 contribute to the active site. An ACP-binding region spans residues 269 to 273 (QANVR). Asn299 is a catalytic residue.

It belongs to the thiolase-like superfamily. FabH family. In terms of assembly, homodimer.

It localises to the cytoplasm. The enzyme catalyses malonyl-[ACP] + acetyl-CoA + H(+) = 3-oxobutanoyl-[ACP] + CO2 + CoA. Its pathway is lipid metabolism; fatty acid biosynthesis. In terms of biological role, essential enzyme that catalyzes the condensation reaction of fatty acid synthesis by the addition to an acyl acceptor of two carbons from malonyl-ACP. Catalyzes the first condensation reaction which initiates fatty acid synthesis and may therefore play a role in governing the total rate of fatty acid production. Possesses both acetoacetyl-ACP synthase and acetyl transacylase activities. Its substrate specificity determines the biosynthesis of branched-chain of fatty acids. In Streptomyces coelicolor (strain ATCC BAA-471 / A3(2) / M145), this protein is Beta-ketoacyl-[acyl-carrier-protein] synthase III 1.